The primary structure comprises 219 residues: tRNA (guanine-N(7)-)-methyltransferase (219 aa).

4 residues coordinate S-adenosyl-L-methionine: glutamate 51, glutamate 76, aspartate 103, and aspartate 125. Residue aspartate 125 is part of the active site. Residues lysine 129, aspartate 161, and 199 to 202 each bind substrate; that span reads TRYE.

It belongs to the class I-like SAM-binding methyltransferase superfamily. TrmB family.

It carries out the reaction guanosine(46) in tRNA + S-adenosyl-L-methionine = N(7)-methylguanosine(46) in tRNA + S-adenosyl-L-homocysteine. It functions in the pathway tRNA modification; N(7)-methylguanine-tRNA biosynthesis. Its function is as follows. Catalyzes the formation of N(7)-methylguanine at position 46 (m7G46) in tRNA. In Hyphomonas neptunium (strain ATCC 15444), this protein is tRNA (guanine-N(7)-)-methyltransferase.